Here is a 606-residue protein sequence, read N- to C-terminus: Phosphomethylpyrimidine synthase (606 aa).

Residues 84–103 form a disordered region; it reads EPYPARSVKPEDNGLTSSPI. Residues asparagine 209, methionine 238, tyrosine 267, histidine 303, 323–325, 364–367, and glutamate 403 contribute to the substrate site; these read SRG and DGLR. Histidine 407 is a Zn(2+) binding site. Residue tyrosine 430 participates in substrate binding. Histidine 471 contacts Zn(2+). [4Fe-4S] cluster contacts are provided by cysteine 551, cysteine 554, and cysteine 559.

It belongs to the ThiC family. Homodimer. It depends on [4Fe-4S] cluster as a cofactor.

It catalyses the reaction 5-amino-1-(5-phospho-beta-D-ribosyl)imidazole + S-adenosyl-L-methionine = 4-amino-2-methyl-5-(phosphooxymethyl)pyrimidine + CO + 5'-deoxyadenosine + formate + L-methionine + 3 H(+). The protein operates within cofactor biosynthesis; thiamine diphosphate biosynthesis. Functionally, catalyzes the synthesis of the hydroxymethylpyrimidine phosphate (HMP-P) moiety of thiamine from aminoimidazole ribotide (AIR) in a radical S-adenosyl-L-methionine (SAM)-dependent reaction. The chain is Phosphomethylpyrimidine synthase from Bartonella tribocorum (strain CIP 105476 / IBS 506).